We begin with the raw amino-acid sequence, 467 residues long: Dynactin subunit 4 (467 aa).

Position 2 is an N-acetylalanine (A2). A Glycyl lysine isopeptide (Lys-Gly) (interchain with G-Cter in SUMO2) cross-link involves residue K222. A Phosphothreonine modification is found at T414.

This sequence belongs to the dynactin subunit 4 family. As to quaternary structure, subunit of dynactin, a multiprotein complex part of a tripartite complex with dynein and a adapter, such as BICDL1, BICD2 or HOOK3. The dynactin complex is built around ACTR1A/ACTB filament and consists of an actin-related filament composed of a shoulder domain, a pointed end and a barbed end. Its length is defined by its flexible shoulder domain. The soulder is composed of 2 DCTN1 subunits, 4 DCTN2 and 2 DCTN3. The 4 DCNT2 (via N-terminus) bind the ACTR1A filament and act as molecular rulers to determine the length. The pointed end is important for binding dynein-dynactin cargo adapters. Consists of 4 subunits: ACTR10, DCNT4, DCTN5 and DCTN6. The barbed end is composed of a CAPZA1:CAPZB heterodimers, which binds ACTR1A/ACTB filament and dynactin and stabilizes dynactin. Interacts with ATP7B, but not ATP7A, in a copper-dependent manner. Interacts with ANK2; this interaction is required for localization at costameres. Interacts with N4BP2L1.

The protein resides in the cytoplasm. It localises to the cytoskeleton. The protein localises to the microtubule organizing center. It is found in the centrosome. Its subcellular location is the stress fiber. The protein resides in the cell cortex. It localises to the myofibril. The protein localises to the sarcomere. Functionally, part of the dynactin complex that activates the molecular motor dynein for ultra-processive transport along microtubules. Together with dynein is involved in spindle assembly and cytokinesis. The protein is Dynactin subunit 4 (DCTN4) of Sus scrofa (Pig).